The chain runs to 882 residues: DNA mismatch repair protein MutS (882 aa).

629–636 serves as a coordination point for ATP; sequence GPNMGGKS.

The protein belongs to the DNA mismatch repair MutS family.

This protein is involved in the repair of mismatches in DNA. It is possible that it carries out the mismatch recognition step. This protein has a weak ATPase activity. The chain is DNA mismatch repair protein MutS from Ralstonia nicotianae (strain ATCC BAA-1114 / GMI1000) (Ralstonia solanacearum).